The following is a 435-amino-acid chain: Diguanylate cyclase TpbB (435 aa).

The Cytoplasmic portion of the chain corresponds to 1-22 (MNRRRRYTGSNPSLRRVLYRAH). Residues 23–43 (LGVALVAVFTAGLAVTLVGLL) form a helical membrane-spanning segment. Over 44 to 154 (TLRAYADPNQ…VKGSGGSLLR (111 aa)) the chain is Periplasmic. Residues 155 to 175 (FLLTGFAGMVLCLLLTALGAF) traverse the membrane as a helical segment. Residues 176 to 435 (YLSRRLVRGI…DSATPEAPPK (260 aa)) lie on the Cytoplasmic side of the membrane. One can recognise an HAMP domain in the interval 183–236 (RGIVGPLDQLAKVAHTVRRERDFEKRVPEAGIAELSQLGEDFNALLDELESWQA). In terms of domain architecture, GGDEF spans 279-415 (EQLAVLFIDS…GSRRLAELND (137 aa)). Mg(2+) is bound by residues S288 and D330. Residue D330 is the Proton acceptor of the active site. Over residues 413 to 426 (LNDPRILQEEKEID) the composition is skewed to basic and acidic residues. A disordered region spans residues 413–435 (LNDPRILQEEKEIDSATPEAPPK).

Homodimer. Interacts with YfiR. Mg(2+) is required as a cofactor. In terms of processing, phosphorylated at both Tyr residues and Ser/Thr residues. Dephosphorylated and inactivated by TpbA.

The protein localises to the cell inner membrane. The enzyme catalyses 2 GTP = 3',3'-c-di-GMP + 2 diphosphate. The protein operates within purine metabolism; 3',5'-cyclic di-GMP biosynthesis. With respect to regulation, activity is tightly controlled by YfiR, a small periplasmic protein, and the OmpA/Pal-like outer-membrane lipoprotein YfiB. Diguanylate cyclase activity is inhibited by the specific interaction of YfiR with the TpbB periplasmic domain and is activated by YfiB, which releases the YfiR-mediated repression through sequestration of YfiR to the outer membrane. Release of repression leads to a conformational shift in TpbB/YfiN that propagates through the PAS and transmembrane domains to switch the cytoplasmic HAMP domain from an inactive to an active conformation and activate the C-terminal catalytic GGDEF domain. Thus, TpbB/YfiN appears to function by switching between discrete inactive and active functional states depending on the presence or absence of bound YfiR. Activity is also controlled by dephosphorylation of the periplasmic domain by the tyrosine phosphatase TpbA. These two mechanisms of regulation could in principle work in parallel or as part of the same regulatory pathway. Does not undergo product feedback inhibition. Catalyzes the synthesis of cyclic-di-GMP (c-di-GMP) via the condensation of 2 GTP molecules. In terms of biological role, part of the YfiB-TpbB-YfiR (or yfiBNR) system, encoding a tripartite signaling module that modulates intracellular c-di-GMP levels. The system is a key regulator of the small colony variant (SCV) phenotype, and plays an important role in biofilm formation and in vivo persistence. The c-di-GMP produced by TpbB/YfiN stimulates the production of the Pel and Psl exopolysaccharides, which promotes surface attachment, generates an SCV phenotype and confers resistance against phagocytosis. The sequence is that of Diguanylate cyclase TpbB from Pseudomonas aeruginosa (strain ATCC 15692 / DSM 22644 / CIP 104116 / JCM 14847 / LMG 12228 / 1C / PRS 101 / PAO1).